Consider the following 276-residue polypeptide: Probable ribose-5-phosphate isomerase 3, chloroplastic (276 aa).

Residues 1-39 constitute a chloroplast transit peptide; sequence MASLSFVSSSHLTLRTPSIALRSTGSSPRTSVSFSVKAQ. At serine 40 the chain carries N-acetylserine. Residue serine 108 is modified to Phosphoserine.

The protein belongs to the ribose 5-phosphate isomerase family. In terms of processing, phosphorylated by SRK2C.

It is found in the plastid. It localises to the chloroplast. It carries out the reaction aldehydo-D-ribose 5-phosphate = D-ribulose 5-phosphate. It functions in the pathway carbohydrate degradation; pentose phosphate pathway; D-ribose 5-phosphate from D-ribulose 5-phosphate (non-oxidative stage): step 1/1. In terms of biological role, catalyzes the reversible conversion of ribose-5-phosphate to ribulose 5-phosphate. The sequence is that of Probable ribose-5-phosphate isomerase 3, chloroplastic (RPI3) from Arabidopsis thaliana (Mouse-ear cress).